An 842-amino-acid polypeptide reads, in one-letter code: MIKERKPSKSRAPGKGHKQIPGVAKESQPIARTRTGNVEFTPAKTHDMVRSLFDPTLKKSFLECWISLAILSNVVLCYFMATKFGASFTKKFFLWQYVFWRLCYNVGIGVVLHFQSNYETLTNFAKMRSLFSKKNQQWLARFCRFEIESKMPNTYCLEEYPEEFNVWLLFRQFVDLILMQDFTTYILFVVLSIPKTVLSSHTVSFALGVIMILFNVWVKVDAHRVVKDYAWYWGDFFFFQDSKLVFDGVFNVSPHPMYSIGYMGYYGLSLISGDYKVLLVSIGGHLLQFLFLKYCENPHIEKIYGSDAVENDNAHIDELLVKENPNYSKPLITKGLWFTNVDKLRLTDYFTILTVASIVLFTFFLKPSTKALFWATLVAKITTSLFISLVLHKQSTSKWFTRLFLKNGYTQVHSFYQWQFLYNYCLTVSYTLLILQTWSQFRHLESRNYTQIIFGFLLCWLQKWCDDEILTAISEFGWFYGDFFLTNYISSRKLNSRGIYRYLSNPERFLGVAGCWGAVLITHFSPYNLILAALWTAANIALVKLVEEPHVSKVYGTSERKSGVSKTLMGFKPIRRFSEIMDKMELRLVRHLTSNDSPFEEEAPTSEEAQWNEVVQLALQSVTANLAPNCEFKLGDGKCDTFIIPGPVEAHWKLPSKLYNNDDWIGLYKVFETGEDRQRTRVSSNGRWTGTNEAAFPYSGRPKKSIVKFQRTGDFVNGTVKFDHSLMFYEEGVYELRYHSGNTHKVLMISQPFRLSLPIVKAESAEELSEGLHQFLAEVHALDGNSFNPNSNRYLGDRFLKGLIKKASGVDLSVKYLRRINYDVSIIGKRVQEIKAVLENLE.

Residues 1–28 are disordered; it reads MIKERKPSKSRAPGKGHKQIPGVAKESQ. At 1–60 the chain is on the lumenal side; the sequence is MIKERKPSKSRAPGKGHKQIPGVAKESQPIARTRTGNVEFTPAKTHDMVRSLFDPTLKKS. Basic residues predominate over residues 8-18; that stretch reads SKSRAPGKGHK. The chain crosses the membrane as a helical span at residues 61 to 81; the sequence is FLECWISLAILSNVVLCYFMA. Residues 82 to 91 are Cytoplasmic-facing; the sequence is TKFGASFTKK. A helical membrane pass occupies residues 92 to 112; that stretch reads FFLWQYVFWRLCYNVGIGVVL. The Lumenal segment spans residues 113–172; the sequence is HFQSNYETLTNFAKMRSLFSKKNQQWLARFCRFEIESKMPNTYCLEEYPEEFNVWLLFRQ. Residues 173–193 form a helical membrane-spanning segment; that stretch reads FVDLILMQDFTTYILFVVLSI. The Cytoplasmic segment spans residues 194 to 196; sequence PKT. The helical transmembrane segment at 197–217 threads the bilayer; it reads VLSSHTVSFALGVIMILFNVW. Residues 218-243 are Lumenal-facing; the sequence is VKVDAHRVVKDYAWYWGDFFFFQDSK. Residues 244 to 264 traverse the membrane as a helical segment; the sequence is LVFDGVFNVSPHPMYSIGYMG. The Cytoplasmic segment spans residues 265-270; it reads YYGLSL. The helical transmembrane segment at 271-291 threads the bilayer; the sequence is ISGDYKVLLVSIGGHLLQFLF. At 292-345 the chain is on the lumenal side; that stretch reads LKYCENPHIEKIYGSDAVENDNAHIDELLVKENPNYSKPLITKGLWFTNVDKLR. The helical transmembrane segment at 346–366 threads the bilayer; sequence LTDYFTILTVASIVLFTFFLK. Over 367 to 370 the chain is Cytoplasmic; the sequence is PSTK. The helical transmembrane segment at 371-391 threads the bilayer; it reads ALFWATLVAKITTSLFISLVL. The Lumenal portion of the chain corresponds to 392 to 414; that stretch reads HKQSTSKWFTRLFLKNGYTQVHS. Residues 415-435 form a helical membrane-spanning segment; it reads FYQWQFLYNYCLTVSYTLLIL. Residues 436 to 468 are Cytoplasmic-facing; it reads QTWSQFRHLESRNYTQIIFGFLLCWLQKWCDDE. The helical transmembrane segment at 469 to 489 threads the bilayer; that stretch reads ILTAISEFGWFYGDFFLTNYI. The Lumenal segment spans residues 490 to 514; that stretch reads SSRKLNSRGIYRYLSNPERFLGVAG. A helical membrane pass occupies residues 515-535; it reads CWGAVLITHFSPYNLILAALW. Over 536-842 the chain is Cytoplasmic; the sequence is TAANIALVKL…EIKAVLENLE (307 aa).

It belongs to the class VI-like SAM-binding methyltransferase superfamily. CHO2 family.

It is found in the endoplasmic reticulum membrane. It carries out the reaction a 1,2-diacyl-sn-glycero-3-phosphoethanolamine + S-adenosyl-L-methionine = a 1,2-diacyl-sn-glycero-3-phospho-N-methylethanolamine + S-adenosyl-L-homocysteine + H(+). It functions in the pathway phospholipid metabolism; phosphatidylcholine biosynthesis. Its function is as follows. Catalyzes the first step of the methylation pathway of phosphatidylcholine biosynthesis, the SAM-dependent methylation of phosphatidylethanolamine (PE) to phosphatidylmonomethylethanolamine (PMME). This Lachancea thermotolerans (strain ATCC 56472 / CBS 6340 / NRRL Y-8284) (Yeast) protein is Phosphatidylethanolamine N-methyltransferase (CHO2).